Consider the following 559-residue polypeptide: MAETVWSTDTGEAVYRSRDPVRNLRLRVHLQRITSSNFLHYQPAAELGKDLIDLATFRPQPTASGHRPEEDEEEEIVIGWQEKLFSQFEVDLYQNETACQSPLDYQYRQEILKLENSGGKKNRRIFTYTDSDRYTNLEEHCQRMTTAASEVPSFLVERMANVRRRRQDRRGMEGGILKSRIVTWEPSEEFVRNNHVINTPLQTMHIMADLGPYKKLGYKKYEHVLCTLKVDSNGVITVKPDFTGLKGPYRIETEGEKQELWKYTIDNVSPHAQPEEEERERRVFKDLYGRHKEYLSSLVGTDFEMTVPGALRLFVNGEVVSAQGYEYDNLYVHFFVELPTAHWSSPAFQQLSGVTQTCTTKSLAMDKVAHFSYPFTFEAFFLHEDESSDALPEWPVLYCEVLSLDFWQRYRVEGYGAVVLPATPGSHTLTVSTWRPVELGTVAELRRFFIGGSLELEDLSYVRIPGSFKGERLSRFGLRTETTGTVTFRLHCLQQSRAFMESSSLQKRMRSVLDRLEGFSQQSSIHNVLEAFRRARRRMQEARESLPQDLVSPSGTLVS.

Residues 311 to 439 (LRLFVNGEVV…TVSTWRPVEL (129 aa)) enclose the C2 B9-type domain.

In terms of assembly, part of the tectonic-like complex (also named B9 complex). Interacts with TMEM107. Interacts with TCTN3, AHI1, TCTN1, TCTN2, CC2D2A. Interacts with FLNA. Interacts with TMEM67. Interacts with B9D1 and B9D2.

It localises to the cytoplasm. The protein resides in the cytoskeleton. It is found in the cilium basal body. Its subcellular location is the microtubule organizing center. The protein localises to the centrosome. Its function is as follows. Component of the tectonic-like complex, a complex localized at the transition zone of primary cilia and acting as a barrier that prevents diffusion of transmembrane proteins between the cilia and plasma membranes. Involved in centrosome migration to the apical cell surface during early ciliogenesis. Required for ciliary structure and function, including a role in regulating length and appropriate number through modulating centrosome duplication. Required for cell branching morphology. This chain is Tectonic-like complex member MKS1 (MKS1), found in Homo sapiens (Human).